The sequence spans 829 residues: Protein SEY1 homolog 2 (829 aa).

The disordered stretch occupies residues 1–21 (MDEVSPTKHFTSKPLLPTKTP). Topologically, residues 1-728 (MDEVSPTKHF…EKENSEIKYQ (728 aa)) are cytoplasmic. In terms of domain architecture, GB1/RHD3-type G spans 83–305 (GMDYNAVGIL…FLPQYNKEIP (223 aa)). Residue 93-100 (GAQSSGKS) coordinates GTP. Coiled coils occupy residues 372 to 396 (KKIMTKEIDTAIEKYKEVTERYMES) and 576 to 596 (DTIEEEIKKSKIDILNIIKEL). The helical transmembrane segment at 729–749 (IPLYLIVLVIFFGFDEFIAIL) threads the bilayer. At 750-752 (TNP) the chain is on the lumenal side. The helical transmembrane segment at 753–773 (LLFILTLIIGGGIYIGYKLNL) threads the bilayer. Topologically, residues 774–829 (GGVAKNYIQYLLSMSLSSTMEYLRTIPFFTPLIDKIWPKDDNKDDDSTEETQEETK) are cytoplasmic.

The protein belongs to the TRAFAC class dynamin-like GTPase superfamily. GB1/RHD3 GTPase family. RHD3 subfamily.

The protein resides in the endoplasmic reticulum membrane. Probable GTP-binding protein that may be involved in cell development. In Entamoeba dispar (strain ATCC PRA-260 / SAW760), this protein is Protein SEY1 homolog 2.